The chain runs to 320 residues: Glucokinase (320 aa).

Belongs to the ROK (NagC/XylR) family. Monomer. A divalent metal cation serves as cofactor.

The catalysed reaction is D-glucose + ATP = D-glucose 6-phosphate + ADP + H(+). Its function is as follows. Catalyzes the phosphorylation of D-glucose to D-glucose 6-phosphate using ATP as the phosphate donor. ITP can also serve as an effective phosphoryl donor. According to Hansen et al., the enzyme has a broad hexose specificity, and in addition to glucose, which shows the highest catalytic efficiency, it can also phosphorylate fructose, mannose, glucosamine, N-acetylglucosamine, N-acetylmannosamine and 2-deoxyglucose. However, according to Sakuraba et al., the enzyme shows strict specificity for D-glucose. In Aeropyrum pernix (strain ATCC 700893 / DSM 11879 / JCM 9820 / NBRC 100138 / K1), this protein is Glucokinase.